A 273-amino-acid chain; its full sequence is Formamidopyrimidine-DNA glycosylase (273 aa).

The active-site Schiff-base intermediate with DNA is the Pro2. Glu3 acts as the Proton donor in catalysis. Catalysis depends on Lys58, which acts as the Proton donor; for beta-elimination activity. Residues His91, Arg110, and Arg153 each contribute to the DNA site. An FPG-type zinc finger spans residues 238-272 (KVYGKEGQPCPRCGEDFVKIKISGRGTTYCLHCQK). Arg262 acts as the Proton donor; for delta-elimination activity in catalysis.

The protein belongs to the FPG family. Monomer. The cofactor is Zn(2+).

It catalyses the reaction Hydrolysis of DNA containing ring-opened 7-methylguanine residues, releasing 2,6-diamino-4-hydroxy-5-(N-methyl)formamidopyrimidine.. The catalysed reaction is 2'-deoxyribonucleotide-(2'-deoxyribose 5'-phosphate)-2'-deoxyribonucleotide-DNA = a 3'-end 2'-deoxyribonucleotide-(2,3-dehydro-2,3-deoxyribose 5'-phosphate)-DNA + a 5'-end 5'-phospho-2'-deoxyribonucleoside-DNA + H(+). Functionally, involved in base excision repair of DNA damaged by oxidation or by mutagenic agents. Acts as a DNA glycosylase that recognizes and removes damaged bases. Has a preference for oxidized purines, such as 7,8-dihydro-8-oxoguanine (8-oxoG). Has AP (apurinic/apyrimidinic) lyase activity and introduces nicks in the DNA strand. Cleaves the DNA backbone by beta-delta elimination to generate a single-strand break at the site of the removed base with both 3'- and 5'-phosphates. This Lactobacillus delbrueckii subsp. bulgaricus (strain ATCC 11842 / DSM 20081 / BCRC 10696 / JCM 1002 / NBRC 13953 / NCIMB 11778 / NCTC 12712 / WDCM 00102 / Lb 14) protein is Formamidopyrimidine-DNA glycosylase.